The primary structure comprises 1080 residues: Serine/threonine-protein kinase KIC1 (1080 aa).

A Protein kinase domain is found at 23-276 (FKRTEVIGRG…ADDLLKSKFI (254 aa)). ATP is bound by residues 29 to 37 (IGRGKFGVV) and K52. The active-site Proton acceptor is the D144. 4 disordered regions span residues 308–347 (EGSI…EIKR), 615–760 (KARS…LAPP), 787–831 (STLN…LQMP), and 901–956 (SQSI…NTGN). Residues 312–326 (PENEPSKPSEAPKPS) show a composition bias toward low complexity. The segment covering 615 to 626 (KARSSTVTAGTP) has biased composition (polar residues). Residues 627 to 638 (SSSSSIQYKSPS) are compositionally biased toward low complexity. Residues 656–673 (STITNQKLGSAVASNSGI) show a composition bias toward polar residues. A compositionally biased stretch (low complexity) spans 674–689 (SSTPNNSNNYNNNTDS). Residues 693 to 726 (RGSSGSNTANSTQMGITNPGNVTKLSTHKASSPS) show a composition bias toward polar residues. S735 is subject to Phosphoserine. A compositionally biased stretch (polar residues) spans 743 to 756 (SPTQNIGHNSTHTN). Residues 787–807 (STLNTISGNSSNNLTSSNYFS) show a composition bias toward low complexity. Basic and acidic residues predominate over residues 808–821 (NEKEGSRVNGDFKR). A compositionally biased stretch (polar residues) spans 901–913 (SQSISNRKNSSAS). The span at 918-956 (NILGSSVSGNVSGIGNNNVGSNNNSGPNNSVPLSANTGN) shows a compositional bias: low complexity.

It belongs to the protein kinase superfamily. Ser/Thr protein kinase family. As to quaternary structure, interacts with CDC31.

It carries out the reaction L-seryl-[protein] + ATP = O-phospho-L-seryl-[protein] + ADP + H(+). It catalyses the reaction L-threonyl-[protein] + ATP = O-phospho-L-threonyl-[protein] + ADP + H(+). Its function is as follows. Protein kinase involved in morphogenesis and cell integrity. This chain is Serine/threonine-protein kinase KIC1 (KIC1), found in Saccharomyces cerevisiae (strain ATCC 204508 / S288c) (Baker's yeast).